A 545-amino-acid chain; its full sequence is Chaperonin GroEL 4 (545 aa).

ATP-binding positions include 30–33 (TLGP), K51, 87–91 (DGTTT), G415, and D495.

This sequence belongs to the chaperonin (HSP60) family. As to quaternary structure, forms a cylinder of 14 subunits composed of two heptameric rings stacked back-to-back. Interacts with the co-chaperonin GroES.

The protein resides in the cytoplasm. The catalysed reaction is ATP + H2O + a folded polypeptide = ADP + phosphate + an unfolded polypeptide.. In terms of biological role, together with its co-chaperonin GroES, plays an essential role in assisting protein folding. The GroEL-GroES system forms a nano-cage that allows encapsulation of the non-native substrate proteins and provides a physical environment optimized to promote and accelerate protein folding. The chain is Chaperonin GroEL 4 from Rhizobium meliloti (strain 1021) (Ensifer meliloti).